A 180-amino-acid polypeptide reads, in one-letter code: ATP-dependent protease subunit HslV (180 aa).

T9 is a catalytic residue. Residues A164, C167, and T170 each coordinate Na(+).

The protein belongs to the peptidase T1B family. HslV subfamily. In terms of assembly, a double ring-shaped homohexamer of HslV is capped on each side by a ring-shaped HslU homohexamer. The assembly of the HslU/HslV complex is dependent on binding of ATP.

The protein resides in the cytoplasm. The catalysed reaction is ATP-dependent cleavage of peptide bonds with broad specificity.. With respect to regulation, allosterically activated by HslU binding. Protease subunit of a proteasome-like degradation complex believed to be a general protein degrading machinery. This is ATP-dependent protease subunit HslV from Leptospira borgpetersenii serovar Hardjo-bovis (strain JB197).